Here is a 291-residue protein sequence, read N- to C-terminus: Acetyl-coenzyme A carboxylase carboxyl transferase subunit beta (291 aa).

Residues 29 to 291 (IMTKCPDCKK…TGGDLEWLEN (263 aa)) form the CoA carboxyltransferase N-terminal domain. 4 residues coordinate Zn(2+): C33, C36, C52, and C55. The segment at 33–55 (CPDCKKIMLTKELDKNLRVCMNC) adopts a C4-type zinc-finger fold.

This sequence belongs to the AccD/PCCB family. As to quaternary structure, acetyl-CoA carboxylase is a heterohexamer composed of biotin carboxyl carrier protein (AccB), biotin carboxylase (AccC) and two subunits each of ACCase subunit alpha (AccA) and ACCase subunit beta (AccD). It depends on Zn(2+) as a cofactor.

It is found in the cytoplasm. The catalysed reaction is N(6)-carboxybiotinyl-L-lysyl-[protein] + acetyl-CoA = N(6)-biotinyl-L-lysyl-[protein] + malonyl-CoA. It participates in lipid metabolism; malonyl-CoA biosynthesis; malonyl-CoA from acetyl-CoA: step 1/1. In terms of biological role, component of the acetyl coenzyme A carboxylase (ACC) complex. Biotin carboxylase (BC) catalyzes the carboxylation of biotin on its carrier protein (BCCP) and then the CO(2) group is transferred by the transcarboxylase to acetyl-CoA to form malonyl-CoA. The chain is Acetyl-coenzyme A carboxylase carboxyl transferase subunit beta from Bacillus licheniformis (strain ATCC 14580 / DSM 13 / JCM 2505 / CCUG 7422 / NBRC 12200 / NCIMB 9375 / NCTC 10341 / NRRL NRS-1264 / Gibson 46).